The sequence spans 334 residues: Flavonol synthase/flavanone 3-hydroxylase (334 aa).

A Fe2OG dioxygenase domain is found at 196-295; it reads DLVYLMKINY…RMSWPVFLEP (100 aa). Positions 220, 222, and 276 each coordinate Fe cation.

Belongs to the iron/ascorbate-dependent oxidoreductase family. It depends on Fe cation as a cofactor. L-ascorbate serves as cofactor.

The protein resides in the cytoplasm. The catalysed reaction is a (2R,3R)-dihydroflavonol + 2-oxoglutarate + O2 = a flavonol + succinate + CO2 + H2O. It catalyses the reaction a (2S)-flavan-4-one + 2-oxoglutarate + O2 = a (2R,3R)-dihydroflavonol + succinate + CO2. It functions in the pathway secondary metabolite biosynthesis; flavonoid biosynthesis. Catalyzes the formation of flavonols from dihydroflavonols. It can act on dihydrokaempferol to produce kaempferol, on dihydroquercetin to produce quercitin and on dihydromyricetin to produce myricetin. The chain is Flavonol synthase/flavanone 3-hydroxylase (FLS) from Eustoma exaltatum subsp. russellianum (Bluebells).